A 695-amino-acid polypeptide reads, in one-letter code: Polyribonucleotide nucleotidyltransferase (695 aa).

The Mg(2+) site is built by Asp-486 and Asp-492. The KH domain occupies Pro-553–Val-612. Residues Gly-622–Lys-690 enclose the S1 motif domain.

This sequence belongs to the polyribonucleotide nucleotidyltransferase family. As to quaternary structure, component of the RNA degradosome, which is a multiprotein complex involved in RNA processing and mRNA degradation. The cofactor is Mg(2+).

The protein resides in the cytoplasm. It catalyses the reaction RNA(n+1) + phosphate = RNA(n) + a ribonucleoside 5'-diphosphate. Its function is as follows. Involved in mRNA degradation. Catalyzes the phosphorolysis of single-stranded polyribonucleotides processively in the 3'- to 5'-direction. In Nitrosococcus oceani (strain ATCC 19707 / BCRC 17464 / JCM 30415 / NCIMB 11848 / C-107), this protein is Polyribonucleotide nucleotidyltransferase.